Reading from the N-terminus, the 280-residue chain is Beta-lactamase OXA-58 (280 aa).

The signal sequence occupies residues 1–18 (MKLLKILSLVCLSISIGA). A lipid anchor (N-palmitoyl cysteine) is attached at Cys19. A lipid anchor (S-diacylglycerol cysteine) is attached at Cys19. The Acyl-ester intermediate role is filled by Ser83. Ser83, Lys86, Ser130, Ser221, Trp223, and Arg263 together coordinate a beta-lactam. Residue Lys86 is modified to N6-carboxylysine.

It belongs to the class-D beta-lactamase family. In terms of assembly, monomer. Dimer. Post-translationally, carboxylated on the epsilon-amino group of a lysine, with the resulting carbamate functional group serving as a general base. Probably N-carboxylated at Lys-86 at neutral pH in vivo and undergoes complete N-decarboxylation, at pH 4.1, in vitro. N-carboxylation at Lys-86 probably increases catalytic activity under physiological conditions.

The protein resides in the cell membrane. The catalysed reaction is a beta-lactam + H2O = a substituted beta-amino acid. With respect to regulation, activated approximately 3-fold by the presence of 0.1M NaHCO3. Functionally, class D beta-lactamase which confers resistance to the beta-lactam antibiotics, including penicillins and oxacillin, and moderate resistance to carbapenems such as imipenem; in the DH10B strain of E.coli. Acts via hydrolysis of the beta-lactam ring. Has benzylpenicillin-, oxacillin-, cephalothin- and imipenem-hydrolyzing activities. The protein is Beta-lactamase OXA-58 of Acinetobacter baumannii.